A 462-amino-acid polypeptide reads, in one-letter code: 23S rRNA (uracil(1939)-C(5))-methyltransferase RlmD (462 aa).

The TRAM domain maps to 6 to 76 (KSRKPQQPEY…KRLEEAEMVE (71 aa)). [4Fe-4S] cluster is bound by residues C90, C96, C99, and C178. Residues Q287, F316, N321, E340, D367, and D388 each contribute to the S-adenosyl-L-methionine site. Catalysis depends on C414, which acts as the Nucleophile.

It belongs to the class I-like SAM-binding methyltransferase superfamily. RNA M5U methyltransferase family. RlmD subfamily.

The catalysed reaction is uridine(1939) in 23S rRNA + S-adenosyl-L-methionine = 5-methyluridine(1939) in 23S rRNA + S-adenosyl-L-homocysteine + H(+). Its function is as follows. Catalyzes the formation of 5-methyl-uridine at position 1939 (m5U1939) in 23S rRNA. The chain is 23S rRNA (uracil(1939)-C(5))-methyltransferase RlmD from Acinetobacter baumannii (strain AB0057).